A 156-amino-acid polypeptide reads, in one-letter code: E3 ubiquitin-protein ligase RNF181 (156 aa).

Residues 79-120 (CPVCLLEFEEQESVREMPCKHLFHTGCILPWLNKTNSCPLCR) form an RING-type; atypical zinc finger. Residues 135-156 (KDKERRRQREHRLEDLHGAMYT) form a disordered region.

Belongs to the RNF181 family.

It catalyses the reaction S-ubiquitinyl-[E2 ubiquitin-conjugating enzyme]-L-cysteine + [acceptor protein]-L-lysine = [E2 ubiquitin-conjugating enzyme]-L-cysteine + N(6)-ubiquitinyl-[acceptor protein]-L-lysine.. The protein operates within protein modification; protein ubiquitination. E3 ubiquitin-protein ligase which accepts ubiquitin from an E2 ubiquitin-conjugating enzyme in the form of a thioester and then directly transfers the ubiquitin to targeted substrates. Catalyzes monoubiquitination of 26S proteasome subunit PSMC2/RPT1. The protein is E3 ubiquitin-protein ligase RNF181 (rnf181) of Danio rerio (Zebrafish).